A 1801-amino-acid chain; its full sequence is Protein mono-ADP-ribosyltransferase PARP14 (1801 aa).

Ser33 is modified (phosphoserine). The interval Ser109–Gly132 is disordered. Macro domains lie at Lys791–Phe978, Trp1003–Ala1190, and Asp1216–Glu1387. Residues Asn824, Leu833, Ser922–Phe926, Asp961, Val1023–Gln1024, Ser1034, Leu1046–Ser1049, Gly1133–Leu1137, Asp1175–Asn1178, Asp1235–Ile1236, Ser1247, Val1258, Gly1332–Ala1336, and Phe1371 each bind a glycoprotein. Residues Ser1403 and Ser1411 each carry the phosphoserine modification. Residues Glu1523–Ser1601 enclose the WWE domain. A PARP catalytic domain is found at Ile1605–Lys1801.

Belongs to the ARTD/PARP family. Interacts with STAT6. Interacts with PARP10. Interacts with PARP9 in IFNG-stimulated macrophages; the interaction prevents PARP14-mediated STAT1 and STAT6 ADP-riboslylation. In terms of processing, auto-ADP-ribosylated. Expressed in macrophages.

It localises to the nucleus. The protein resides in the cytoplasm. The catalysed reaction is L-glutamyl-[protein] + NAD(+) = 5-O-(ADP-D-ribosyl)-L-glutamyl-[protein] + nicotinamide. Its function is as follows. ADP-ribosyltransferase that mediates mono-ADP-ribosylation of glutamate residues on target proteins. In contrast to PARP1 and PARP2, it is not able to mediate poly-ADP-ribosylation. Has been shown to catalyze the mono-ADP-ribosylation of STAT1 at 'Glu-657' and 'Glu-705', thus decreasing STAT1 phosphorylation which negatively regulates pro-inflammatory cytokine production in macrophages in response to IFNG stimulation. However, the role of ADP-ribosylation in the prevention of STAT1 phosphorylation has been called into question and it has been suggested that the inhibition of phosphorylation may be the result of sumoylation of STAT1 'Lys-703'. Mono-ADP-ribosylates STAT6; enhancing STAT6-dependent transcription. In macrophages, positively regulates MRC1 expression in response to IL4 stimulation by promoting STAT6 phosphorylation. Mono-ADP-ribosylates PARP9. This Homo sapiens (Human) protein is Protein mono-ADP-ribosyltransferase PARP14.